Here is a 187-residue protein sequence, read N- to C-terminus: Basic helix-loop-helix transcription factor scleraxis (187 aa).

Disordered stretches follow at residues 21–83 (LSED…TNSV) and 140–163 (AFFHHGGGGGSPPPRDSENSQPKQ). The span at 34–43 (SDEKPFHLDA) shows a compositional bias: basic and acidic residues. Positions 50 to 72 (AGKRRSGKKAGRLHREPRQRHTA) are enriched in basic residues. The bHLH domain occupies 67 to 119 (RQRHTANARERDRTNSVNTAFTALRTLIPTEPADRKLSKIETLRLASSYISHL).

As to quaternary structure, efficient DNA binding requires dimerization with another bHLH protein. Dimerizes and binds the E-box consensus sequence with E12. As to expression, expressed in the intersomitic, the superficial proximomedial limb mesenchyme and the subectodermal mesenchyme.

It localises to the nucleus. Plays an early essential role in mesoderm formation, as well as a later role in formation of somite-derived chondrogenic lineages. This chain is Basic helix-loop-helix transcription factor scleraxis (SCX), found in Gallus gallus (Chicken).